The chain runs to 265 residues: 5'-nucleotidase SurE (265 aa).

Residues D11, D12, S43, and N101 each contribute to the a divalent metal cation site.

Belongs to the SurE nucleotidase family. A divalent metal cation is required as a cofactor.

The protein resides in the cytoplasm. The catalysed reaction is a ribonucleoside 5'-phosphate + H2O = a ribonucleoside + phosphate. In terms of biological role, nucleotidase that shows phosphatase activity on nucleoside 5'-monophosphates. This Synechococcus sp. (strain CC9311) protein is 5'-nucleotidase SurE.